The chain runs to 431 residues: MSKIVKVIGREIIDSRGNPTVEAEVHLEGGFVGLAAAPSGASTGSREALELRDGDKSRFLGKGVTKAVGAVNGPIAEAVTGKDAKDQANIDKIMIDLDGTENKSKFGANAILAVSLAAAKAAAAAKGMPLYEHIAELNGTPGKFSMPLPMMNIINGGEHADNNVDIQEFMIQPVGAKTLKEAVRIGSEVFHNLAKVLKSKGMSTAVGDEGGYAPNLGSNAEALAVIAEAVKAAGYELGKDITLAMDCAASEFYKDGKYVLAGEGNKAFTSEEFTHFLEDLTKQYPIVSIEDGLDESDWDGFAYQTKVLGDKIQLVGDDLFVTNTKILKEGIDKGIANSILIKFNQIGSLTETLAAIKMAKDAGYTAVISHRSGETEDATIADLAVGTAAGQIKTGSMSRSDRVAKYNQLIRIEEALGNRAPFNGLKEVKGQ.

Residue Q167 coordinates (2R)-2-phosphoglycerate. The active-site Proton donor is E209. 3 residues coordinate Mg(2+): D246, E290, and D317. Residues K342, R371, S372, and K393 each coordinate (2R)-2-phosphoglycerate. The active-site Proton acceptor is the K342.

This sequence belongs to the enolase family. In terms of assembly, component of the RNA degradosome, a multiprotein complex involved in RNA processing and mRNA degradation. The cofactor is Mg(2+).

Its subcellular location is the cytoplasm. It is found in the secreted. It localises to the cell surface. The catalysed reaction is (2R)-2-phosphoglycerate = phosphoenolpyruvate + H2O. The protein operates within carbohydrate degradation; glycolysis; pyruvate from D-glyceraldehyde 3-phosphate: step 4/5. In terms of biological role, catalyzes the reversible conversion of 2-phosphoglycerate (2-PG) into phosphoenolpyruvate (PEP). It is essential for the degradation of carbohydrates via glycolysis. The protein is Enolase of Erwinia tasmaniensis (strain DSM 17950 / CFBP 7177 / CIP 109463 / NCPPB 4357 / Et1/99).